The sequence spans 1024 residues: PH and SEC7 domain-containing protein 1 (1024 aa).

4 disordered regions span residues 25–98 (WLPE…GAQS), 113–230 (PLNG…EVSS), 246–401 (SLDP…GPDS), and 430–536 (ASPG…LDST). Residues 71-95 (RGPPSPRVAPSPWAPSSPTGQPPPG) are compositionally biased toward pro residues. Residues Ser-126 and Ser-156 each carry the phosphoserine modification. Positions 215-230 (FLNQGDTWSSPREVSS) are enriched in polar residues. Positions 300 to 313 (DIDEVLAEREEADS) are enriched in acidic residues. Residues 327–342 (TAYPPAPRPGPLPGPH) are compositionally biased toward pro residues. The span at 349–369 (NEDEDDDEAGGEEDVDDEVFE) shows a compositional bias: acidic residues. Positions 445–463 (PPQPPAPRPDPPAPAPLAP) are enriched in pro residues. An SEC7 domain is found at 512–706 (GAAPLGSEPP…KALYSSIKNE (195 aa)). Phosphoserine is present on Ser-720. A PH domain is found at 756–869 (AVYKHGALVR…WITRINVVAA (114 aa)). A coiled-coil region spans residues 898-924 (LSQEEQVRTHEAKLKAMASELREHRAA). The interval 976-1024 (ALAQAGSTEDGLPPSHSSPSLQPKPSSQPRAQRHSSEPRPGAGSGRRKP) is disordered. The segment covering 987 to 1004 (LPPSHSSPSLQPKPSSQP) has biased composition (low complexity).

Belongs to the PSD family. In terms of assembly, interacts with ACTN1. Interacts (ARF6-bound form) with KCNK1; does not interact with KCNK1 in the absence of ARF6. Isoform 2 is expressed in the brain.

It localises to the cell membrane. The protein localises to the cell projection. Its subcellular location is the ruffle membrane. The protein resides in the cleavage furrow. Guanine nucleotide exchange factor for ARF6. Induces cytoskeletal remodeling. The polypeptide is PH and SEC7 domain-containing protein 1 (PSD) (Homo sapiens (Human)).